Here is a 298-residue protein sequence, read N- to C-terminus: Tyrosine recombinase XerC (298 aa).

The 87-residue stretch at 2 to 88 (TDLHTDVERY…ALRSFFDWLV (87 aa)) folds into the Core-binding (CB) domain. Positions 109-288 (HLPKNIDVDD…DFQHLASVYD (180 aa)) constitute a Tyr recombinase domain. Active-site residues include Arg148, Lys172, His240, Arg243, and His266. Tyr275 functions as the O-(3'-phospho-DNA)-tyrosine intermediate in the catalytic mechanism.

Belongs to the 'phage' integrase family. XerC subfamily. As to quaternary structure, forms a cyclic heterotetrameric complex composed of two molecules of XerC and two molecules of XerD, in which XerC interacts with XerD via its C-terminal region, XerD interacts with XerC via its C-terminal region and so on.

Its subcellular location is the cytoplasm. Its activity is regulated as follows. FtsK may regulate the catalytic switch between XerC and XerD in the heterotetrameric complex during the two steps of the recombination process. In terms of biological role, site-specific tyrosine recombinase, which acts by catalyzing the cutting and rejoining of the recombining DNA molecules. Binds cooperatively to specific DNA consensus sequences that are separated from XerD binding sites by a short central region, forming the heterotetrameric XerC-XerD complex that recombines DNA substrates. The complex is essential to convert dimers of the bacterial chromosome into monomers to permit their segregation at cell division. It also contributes to the segregational stability of plasmids. In the complex XerC specifically exchanges the top DNA strands. The protein is Tyrosine recombinase XerC of Escherichia coli O127:H6 (strain E2348/69 / EPEC).